The primary structure comprises 325 residues: Cytochrome f (325 aa).

An N-terminal signal peptide occupies residues 1 to 40; sequence MSKINLSTMWSSFIKKIAKTILVAIACISLFLTSSPAANA. Heme contacts are provided by tyrosine 41, cysteine 62, cysteine 65, and histidine 66. The helical transmembrane segment at 291-311 threads the bilayer; the sequence is VKWLMAFFALVMLAQIMLVLK.

This sequence belongs to the cytochrome f family. The 4 large subunits of the cytochrome b6-f complex are cytochrome b6, subunit IV (17 kDa polypeptide, PetD), cytochrome f and the Rieske protein, while the 4 small subunits are PetG, PetL, PetM and PetN. The complex functions as a dimer. The cofactor is heme.

Its subcellular location is the cellular thylakoid membrane. Functionally, component of the cytochrome b6-f complex, which mediates electron transfer between photosystem II (PSII) and photosystem I (PSI), cyclic electron flow around PSI, and state transitions. The polypeptide is Cytochrome f (Trichodesmium erythraeum (strain IMS101)).